Reading from the N-terminus, the 455-residue chain is Bifunctional protein GlmU (455 aa).

Residues 1–226 (MSLDIVILAA…AMEVQGANDR (226 aa)) form a pyrophosphorylase region. UDP-N-acetyl-alpha-D-glucosamine-binding positions include 8–11 (LAAG), lysine 22, glutamine 73, 78–79 (GT), 99–101 (YGD), glycine 136, glutamate 151, asparagine 166, and asparagine 224. Aspartate 101 lines the Mg(2+) pocket. Mg(2+) is bound at residue asparagine 224. Residues 227–247 (KQLSELERHYQMREARRLMAA) form a linker region. The segment at 248 to 455 (GVTLRDPARF…WKRPVKISKD (208 aa)) is N-acetyltransferase. UDP-N-acetyl-alpha-D-glucosamine is bound by residues arginine 330 and lysine 348. Histidine 360 functions as the Proton acceptor in the catalytic mechanism. 2 residues coordinate UDP-N-acetyl-alpha-D-glucosamine: tyrosine 363 and asparagine 374. Acetyl-CoA contacts are provided by residues alanine 377, 383 to 384 (NY), serine 402, alanine 420, and arginine 437.

This sequence in the N-terminal section; belongs to the N-acetylglucosamine-1-phosphate uridyltransferase family. In the C-terminal section; belongs to the transferase hexapeptide repeat family. In terms of assembly, homotrimer. It depends on Mg(2+) as a cofactor.

It is found in the cytoplasm. The enzyme catalyses alpha-D-glucosamine 1-phosphate + acetyl-CoA = N-acetyl-alpha-D-glucosamine 1-phosphate + CoA + H(+). It carries out the reaction N-acetyl-alpha-D-glucosamine 1-phosphate + UTP + H(+) = UDP-N-acetyl-alpha-D-glucosamine + diphosphate. It functions in the pathway nucleotide-sugar biosynthesis; UDP-N-acetyl-alpha-D-glucosamine biosynthesis; N-acetyl-alpha-D-glucosamine 1-phosphate from alpha-D-glucosamine 6-phosphate (route II): step 2/2. The protein operates within nucleotide-sugar biosynthesis; UDP-N-acetyl-alpha-D-glucosamine biosynthesis; UDP-N-acetyl-alpha-D-glucosamine from N-acetyl-alpha-D-glucosamine 1-phosphate: step 1/1. It participates in bacterial outer membrane biogenesis; LPS lipid A biosynthesis. In terms of biological role, catalyzes the last two sequential reactions in the de novo biosynthetic pathway for UDP-N-acetylglucosamine (UDP-GlcNAc). The C-terminal domain catalyzes the transfer of acetyl group from acetyl coenzyme A to glucosamine-1-phosphate (GlcN-1-P) to produce N-acetylglucosamine-1-phosphate (GlcNAc-1-P), which is converted into UDP-GlcNAc by the transfer of uridine 5-monophosphate (from uridine 5-triphosphate), a reaction catalyzed by the N-terminal domain. This Pseudomonas syringae pv. syringae (strain B728a) protein is Bifunctional protein GlmU.